Consider the following 379-residue polypeptide: Putative zinc metalloprotease sll0528 (379 aa).

The next 2 membrane-spanning stretches (helical) occupy residues Leu-20–Leu-40 and Gly-54–Ala-74. Residue His-75 coordinates Zn(2+). Glu-76 is an active-site residue. His-79 is a Zn(2+) binding site. The next 3 helical transmembrane spans lie at Phe-115–Val-135, Ile-148–Leu-168, and Gly-212–Leu-232. CBS domains are found at residues Val-257–Gln-315 and Met-322–Ala-379.

The protein belongs to the peptidase M50B family. It depends on Zn(2+) as a cofactor.

The protein resides in the cell membrane. In Synechocystis sp. (strain ATCC 27184 / PCC 6803 / Kazusa), this protein is Putative zinc metalloprotease sll0528.